Reading from the N-terminus, the 355-residue chain is Neurogenic differentiation factor 1 (355 aa).

The tract at residues 1–93 (MTKSYSESGL…GPKKKKMTKA (93 aa)) is disordered. A compositionally biased stretch (acidic residues) spans 58 to 77 (DEEDEDEDLEEEDEEEEEDD). Over residues 80-92 (PKRRGPKKKKMTK) the composition is skewed to basic residues. The Nuclear localization signal motif lies at 86–92 (KKKKMTK). A bHLH domain is found at 100–152 (LRRMKANARERNRMHGLNAALDNLRKVVPCYSKTQKLSKIETLRLAKNYIWAL). Ser161, Ser258, Ser265, and Ser273 each carry phosphoserine. Ser334 is modified (phosphoserine; by CaMK2).

In terms of assembly, efficient DNA-binding requires dimerization with another bHLH protein. Heterodimer with TCF3/E47; the heterodimer is inhibited in presence of ID2, but not NR0B2, to E-box element. Interacts with EP300; the interaction is inhibited by NR0B2. Interacts with RREB1. Interacts with ATOH8. Post-translationally, phosphorylated. In islet cells, phosphorylated on Ser-273 upon glucose stimulation; which may be required for nuclear localization. In activated neurons, phosphorylated on Ser-334; which promotes dendritic growth. Phosphorylated by MAPK1; phosphorylation regulates heterodimerization and DNA-binding activities. Phosphorylation on Ser-265 and Ser-273 increases transactivation on the insulin promoter in glucose-stimulated insulinoma cells. As to expression, most abundant in pancreatic alpha- and beta-cells, less in brain and intestine.

Its subcellular location is the cytoplasm. The protein localises to the nucleus. Acts as a transcriptional activator: mediates transcriptional activation by binding to E box-containing promoter consensus core sequences 5'-CANNTG-3'. Associates with the p300/CBP transcription coactivator complex to stimulate transcription of the secretin gene as well as the gene encoding the cyclin-dependent kinase inhibitor CDKN1A. Contributes to the regulation of several cell differentiation pathways, like those that promote the formation of early retinal ganglion cells, inner ear sensory neurons, granule cells forming either the cerebellum or the dentate gyrus cell layer of the hippocampus, endocrine islet cells of the pancreas and enteroendocrine cells of the small intestine. Together with PAX6 or SIX3, is required for the regulation of amacrine cell fate specification. Also required for dendrite morphogenesis and maintenance in the cerebellar cortex. Associates with chromatin to enhancer regulatory elements in genes encoding key transcriptional regulators of neurogenesis. The polypeptide is Neurogenic differentiation factor 1 (NEUROD1) (Mesocricetus auratus (Golden hamster)).